A 479-amino-acid polypeptide reads, in one-letter code: Cardiolipin synthase A (479 aa).

The next 2 helical transmembrane spans lie at 8–28 (FFGY…IHAL) and 38–58 (IAWA…YLVF). PLD phosphodiesterase domains lie at 218–245 (INFR…GDEY) and 392–419 (EPGF…DNRS). Catalysis depends on residues H223, K225, D230, H397, K399, and D404.

It belongs to the phospholipase D family. Cardiolipin synthase subfamily. ClsA sub-subfamily.

The protein resides in the cell inner membrane. It catalyses the reaction 2 a 1,2-diacyl-sn-glycero-3-phospho-(1'-sn-glycerol) = a cardiolipin + glycerol. In terms of biological role, catalyzes the reversible phosphatidyl group transfer from one phosphatidylglycerol molecule to another to form cardiolipin (CL) (diphosphatidylglycerol) and glycerol. This chain is Cardiolipin synthase A, found in Pseudomonas syringae pv. syringae (strain B728a).